We begin with the raw amino-acid sequence, 109 residues long: Aquaporin-2 (109 aa).

At 1–6 the chain is on the cytoplasmic side; it reads SIAFSR. The chain crosses the membrane as a helical span at residues 7-27; sequence AVFAEFLATLLFVFFGLGSAL. Residues 28–35 lie on the Extracellular side of the membrane; that stretch reads NWPSALPS. A helical membrane pass occupies residues 36–54; it reads TLQIAMAFGLGIGTLVQAL. The Cytoplasmic segment spans residues 55-59; sequence GHVSG. The segment at residues 60–69 is an intramembrane region (discontinuously helical); sequence AHINPAVTVA. The NPA 1 motif lies at 63-65; that stretch reads NPA. Topologically, residues 70 to 80 are cytoplasmic; it reads CLVGCHVSFLR. The chain crosses the membrane as a helical span at residues 81–102; that stretch reads AAFYVAAQLLGAVAGAALLHEI. Over 103 to 109 the chain is Extracellular; sequence TPAEVRG.

The protein belongs to the MIP/aquaporin (TC 1.A.8) family. Homotetramer. In terms of processing, serine phosphorylation is necessary and sufficient for expression at the apical membrane. Endocytosis is not phosphorylation-dependent. N-glycosylated.

Its subcellular location is the apical cell membrane. The protein resides in the basolateral cell membrane. The protein localises to the cell membrane. It is found in the cytoplasmic vesicle membrane. It localises to the golgi apparatus. Its subcellular location is the trans-Golgi network membrane. The enzyme catalyses H2O(in) = H2O(out). It catalyses the reaction glycerol(in) = glycerol(out). Functionally, forms a water-specific channel that provides the plasma membranes of renal collecting duct with high permeability to water, thereby permitting water to move in the direction of an osmotic gradient. Plays an essential role in renal water homeostasis. Could also be permeable to glycerol. This chain is Aquaporin-2, found in Oryctolagus cuniculus (Rabbit).